The chain runs to 204 residues: Putative AgrB-like protein (204 aa).

The next 4 membrane-spanning stretches (helical) occupy residues 52-74 (YGIA…YLWL), 87-107 (LNCT…FQNV), 111-131 (NWIV…FAPA), and 156-176 (LILT…LIMI).

The protein belongs to the AgrB family.

It localises to the cell membrane. Its function is as follows. May be involved in the proteolytic processing of a quorum sensing system signal molecule precursor. This is Putative AgrB-like protein from Listeria monocytogenes serotype 4a (strain HCC23).